Here is a 488-residue protein sequence, read N- to C-terminus: Bifunctional protein HldE (488 aa).

A ribokinase region spans residues 1–327 (MDDTLAKLPR…GLAHGEHADP (327 aa)). 201 to 204 (NRRE) serves as a coordination point for ATP. Aspartate 272 is a catalytic residue. Residues 354-488 (FTNGCFDLLH…GRMNAPAVGG (135 aa)) form a cytidylyltransferase region.

The protein in the N-terminal section; belongs to the carbohydrate kinase PfkB family. This sequence in the C-terminal section; belongs to the cytidylyltransferase family. Homodimer.

The enzyme catalyses D-glycero-beta-D-manno-heptose 7-phosphate + ATP = D-glycero-beta-D-manno-heptose 1,7-bisphosphate + ADP + H(+). The catalysed reaction is D-glycero-beta-D-manno-heptose 1-phosphate + ATP + H(+) = ADP-D-glycero-beta-D-manno-heptose + diphosphate. The protein operates within nucleotide-sugar biosynthesis; ADP-L-glycero-beta-D-manno-heptose biosynthesis; ADP-L-glycero-beta-D-manno-heptose from D-glycero-beta-D-manno-heptose 7-phosphate: step 1/4. It functions in the pathway nucleotide-sugar biosynthesis; ADP-L-glycero-beta-D-manno-heptose biosynthesis; ADP-L-glycero-beta-D-manno-heptose from D-glycero-beta-D-manno-heptose 7-phosphate: step 3/4. Its function is as follows. Catalyzes the phosphorylation of D-glycero-D-manno-heptose 7-phosphate at the C-1 position to selectively form D-glycero-beta-D-manno-heptose-1,7-bisphosphate. Catalyzes the ADP transfer from ATP to D-glycero-beta-D-manno-heptose 1-phosphate, yielding ADP-D-glycero-beta-D-manno-heptose. This is Bifunctional protein HldE from Caulobacter sp. (strain K31).